Reading from the N-terminus, the 239-residue chain is Heptaprenylglyceryl phosphate synthase (239 aa).

Lys12 contacts sn-glycerol 1-phosphate. Residues Asp14 and Thr40 each contribute to the Mg(2+) site. Sn-glycerol 1-phosphate contacts are provided by residues 159–164, Gly189, and 209–210; these read YLEYSG and GN.

The protein belongs to the GGGP/HepGP synthase family. Group I subfamily. As to quaternary structure, homodimer. Mg(2+) is required as a cofactor.

It catalyses the reaction sn-glycerol 1-phosphate + all-trans-heptaprenyl diphosphate = 3-heptaprenyl-sn-glycero-1-phosphate + diphosphate. The protein operates within membrane lipid metabolism; glycerophospholipid metabolism. Functionally, prenyltransferase that catalyzes in vivo the transfer of the heptaprenyl moiety of heptaprenyl pyrophosphate (HepPP; 35 carbon atoms) to the C3 hydroxyl of sn-glycerol-1-phosphate (G1P), producing heptaprenylglyceryl phosphate (HepGP). This reaction is an ether-bond-formation step in the biosynthesis of archaea-type G1P-based membrane lipids found in Bacillales. To a much lesser extent, is also able to use geranylgeranyl diphosphate (GGPP; C20) as the prenyl donor. In Geobacillus kaustophilus (strain HTA426), this protein is Heptaprenylglyceryl phosphate synthase.